Consider the following 431-residue polypeptide: Trigger factor (431 aa).

Positions 163–248 constitute a PPIase FKBP-type domain; sequence GHFAVIDFTG…LSEIKVKELP (86 aa).

The protein belongs to the FKBP-type PPIase family. Tig subfamily.

Its subcellular location is the cytoplasm. The catalysed reaction is [protein]-peptidylproline (omega=180) = [protein]-peptidylproline (omega=0). Its function is as follows. Involved in protein export. Acts as a chaperone by maintaining the newly synthesized protein in an open conformation. Functions as a peptidyl-prolyl cis-trans isomerase. This is Trigger factor from Geobacter sulfurreducens (strain ATCC 51573 / DSM 12127 / PCA).